A 400-amino-acid polypeptide reads, in one-letter code: Acetyl-CoA decarbonylase/synthase complex subunit delta (400 aa).

The protein belongs to the CdhD family. Heterodimer of delta and gamma chains. The ACDS complex is made up of alpha, epsilon, beta, gamma and delta chains with a probable stoichiometry of (alpha(2)epsilon(2))(4)-beta(8)-(gamma(1)delta(1))(8).

Its function is as follows. Part of a complex that catalyzes the reversible cleavage of acetyl-CoA, allowing autotrophic growth from CO(2). Probably maintains the overall quaternary structure of the ACDS complex. This chain is Acetyl-CoA decarbonylase/synthase complex subunit delta, found in Methanopyrus kandleri (strain AV19 / DSM 6324 / JCM 9639 / NBRC 100938).